An 832-amino-acid polypeptide reads, in one-letter code: Leucine--tRNA ligase (832 aa).

The 'HIGH' region signature appears at 58–68 (PYPSGDLHMGH). Positions 598–602 (AMSKS) match the 'KMSKS' region motif. An ATP-binding site is contributed by Lys601.

It belongs to the class-I aminoacyl-tRNA synthetase family.

Its subcellular location is the cytoplasm. It carries out the reaction tRNA(Leu) + L-leucine + ATP = L-leucyl-tRNA(Leu) + AMP + diphosphate. In Acidothermus cellulolyticus (strain ATCC 43068 / DSM 8971 / 11B), this protein is Leucine--tRNA ligase.